The following is a 196-amino-acid chain: ATP-dependent Clp protease proteolytic subunit (196 aa).

Ser-101 functions as the Nucleophile in the catalytic mechanism. The active site involves His-126.

The protein belongs to the peptidase S14 family. Component of the chloroplastic Clp protease core complex.

The protein localises to the plastid. It is found in the chloroplast stroma. It catalyses the reaction Hydrolysis of proteins to small peptides in the presence of ATP and magnesium. alpha-casein is the usual test substrate. In the absence of ATP, only oligopeptides shorter than five residues are hydrolyzed (such as succinyl-Leu-Tyr-|-NHMec, and Leu-Tyr-Leu-|-Tyr-Trp, in which cleavage of the -Tyr-|-Leu- and -Tyr-|-Trp bonds also occurs).. Functionally, cleaves peptides in various proteins in a process that requires ATP hydrolysis. Has a chymotrypsin-like activity. Plays a major role in the degradation of misfolded proteins. In Panax ginseng (Korean ginseng), this protein is ATP-dependent Clp protease proteolytic subunit.